The sequence spans 103 residues: N(4)-acetylcytidine amidohydrolase (103 aa).

The ASCH domain occupies 6–101 (ITFFQRFQDD…QTQFYVIEFK (96 aa)). K21 serves as the catalytic Proton acceptor. The Nucleophile role is filled by T24. The active-site Proton donor is E74.

Belongs to the N(4)-acetylcytidine amidohydrolase family.

It catalyses the reaction N(4)-acetylcytidine + H2O = cytidine + acetate + H(+). The enzyme catalyses N(4)-acetyl-2'-deoxycytidine + H2O = 2'-deoxycytidine + acetate + H(+). It carries out the reaction N(4)-acetylcytosine + H2O = cytosine + acetate + H(+). Its function is as follows. Catalyzes the hydrolysis of N(4)-acetylcytidine (ac4C). This Escherichia coli (strain K12 / MC4100 / BW2952) protein is N(4)-acetylcytidine amidohydrolase (yqfB).